The following is a 639-amino-acid chain: Elongation factor 4 (639 aa).

The tr-type G domain maps to 39–220 (AQIRNFCIIA…EVVRLVPPPT (182 aa)). GTP contacts are provided by residues 51–56 (DHGKST) and 167–170 (NKID).

The protein belongs to the TRAFAC class translation factor GTPase superfamily. Classic translation factor GTPase family. LepA subfamily.

It is found in the cell membrane. It carries out the reaction GTP + H2O = GDP + phosphate + H(+). Its function is as follows. Required for accurate and efficient protein synthesis under certain stress conditions. May act as a fidelity factor of the translation reaction, by catalyzing a one-codon backward translocation of tRNAs on improperly translocated ribosomes. Back-translocation proceeds from a post-translocation (POST) complex to a pre-translocation (PRE) complex, thus giving elongation factor G a second chance to translocate the tRNAs correctly. Binds to ribosomes in a GTP-dependent manner. The polypeptide is Elongation factor 4 (Mycobacterium sp. (strain JLS)).